We begin with the raw amino-acid sequence, 540 residues long: Glucose-6-phosphate isomerase (540 aa).

The active-site Proton donor is E350. Catalysis depends on residues H381 and K503.

The protein belongs to the GPI family.

The protein localises to the cytoplasm. The catalysed reaction is alpha-D-glucose 6-phosphate = beta-D-fructose 6-phosphate. It functions in the pathway carbohydrate biosynthesis; gluconeogenesis. It participates in carbohydrate degradation; glycolysis; D-glyceraldehyde 3-phosphate and glycerone phosphate from D-glucose: step 2/4. In terms of biological role, catalyzes the reversible isomerization of glucose-6-phosphate to fructose-6-phosphate. This chain is Glucose-6-phosphate isomerase, found in Burkholderia multivorans (strain ATCC 17616 / 249).